The following is a 612-amino-acid chain: Kelch-like protein 40a (612 aa).

In terms of domain architecture, BTB spans valine 34 to glutamate 101. One can recognise a BACK domain in the interval cysteine 136–glutamate 238. Residues arginine 266–glutamate 275 show a composition bias toward basic residues. Positions arginine 266 to glycine 290 are disordered. Over residues phenylalanine 281–glycine 290 the composition is skewed to acidic residues. Kelch repeat units follow at residues glutamine 350–asparagine 402, serine 403–glycine 452, leucine 453–asparagine 500, isoleucine 502–glycine 547, and leucine 549–leucine 604.

It belongs to the KLHL40 family. As to quaternary structure, component of the BCR(KLHL40) E3 ubiquitin ligase complex. As to expression, expressed in skeletal muscle and heart. Detected, although at much lower levels, in brain, eye and fin.

It localises to the cytoplasm. It is found in the myofibril. The protein localises to the sarcomere. The protein resides in the a band. Its subcellular location is the i band. Functionally, substrate-specific adapter of a BCR (BTB-CUL3-RBX1) E3 ubiquitin ligase complex. Required for skeletal muscle development. The sequence is that of Kelch-like protein 40a (klhl40a) from Danio rerio (Zebrafish).